A 542-amino-acid polypeptide reads, in one-letter code: CTP synthase (542 aa).

The amidoligase domain stretch occupies residues 1 to 266 (MATNYIFVTG…DDLICQRFRL (266 aa)). Residue S14 coordinates CTP. S14 serves as a coordination point for UTP. Residues 15–20 (SLGKGI) and D72 contribute to the ATP site. Mg(2+)-binding residues include D72 and E140. Residues 147–149 (DIE), 187–192 (KTKPTQ), and K223 each bind CTP. UTP is bound by residues 187-192 (KTKPTQ) and K223. 239 to 241 (KDV) serves as a coordination point for ATP. The Glutamine amidotransferase type-1 domain occupies 291–542 (TIGMVGKYVE…VKAAKENQKK (252 aa)). G352 contacts L-glutamine. C379 functions as the Nucleophile; for glutamine hydrolysis in the catalytic mechanism. L-glutamine contacts are provided by residues 380-383 (LGMQ), E403, and R470. Residues H515 and E517 contribute to the active site.

It belongs to the CTP synthase family. In terms of assembly, homotetramer.

It catalyses the reaction UTP + L-glutamine + ATP + H2O = CTP + L-glutamate + ADP + phosphate + 2 H(+). The enzyme catalyses L-glutamine + H2O = L-glutamate + NH4(+). The catalysed reaction is UTP + NH4(+) + ATP = CTP + ADP + phosphate + 2 H(+). It participates in pyrimidine metabolism; CTP biosynthesis via de novo pathway; CTP from UDP: step 2/2. Allosterically activated by GTP, when glutamine is the substrate; GTP has no effect on the reaction when ammonia is the substrate. The allosteric effector GTP functions by stabilizing the protein conformation that binds the tetrahedral intermediate(s) formed during glutamine hydrolysis. Inhibited by the product CTP, via allosteric rather than competitive inhibition. Its function is as follows. Catalyzes the ATP-dependent amination of UTP to CTP with either L-glutamine or ammonia as the source of nitrogen. Regulates intracellular CTP levels through interactions with the four ribonucleotide triphosphates. This Mannheimia succiniciproducens (strain KCTC 0769BP / MBEL55E) protein is CTP synthase.